The primary structure comprises 446 residues: Probable E3 ubiquitin-protein ligase XBOS31 (446 aa).

ANK repeat units follow at residues 46-75 (DRFTALHIAAANGRLQVLSMLLDRDGDVDV), 79-108 (KKQTPLMVAAMRGNTECVVRLLRGGANVLT), 113-142 (RARTCLHHAAYYGHAECLQAILGAAAQAQG), 160-189 (RGATPLHLAARHARASCVRLLLDKGAIVSA), and 197-227 (PGSTALHLAARAGSMECIRELLAWGADRLQR). Residues 317–366 (CNICFEQACSMEVKECGHQMCAACTLAICCHSKPNPKTLLLHPPACPFCR) form an RING-type zinc finger. The disordered stretch occupies residues 376-401 (TTNSNKTNSRRRSRSRSSSFKGGLSS).

It carries out the reaction S-ubiquitinyl-[E2 ubiquitin-conjugating enzyme]-L-cysteine + [acceptor protein]-L-lysine = [E2 ubiquitin-conjugating enzyme]-L-cysteine + N(6)-ubiquitinyl-[acceptor protein]-L-lysine.. Its pathway is protein modification; protein ubiquitination. In Oryza sativa subsp. japonica (Rice), this protein is Probable E3 ubiquitin-protein ligase XBOS31 (XBOS31).